We begin with the raw amino-acid sequence, 551 residues long: Membrane protein insertase YidC (551 aa).

A helical membrane pass occupies residues 6–26 (YFLWGALFISGYLLFLQWSQD). The span at 34–50 (SVAQSTQSQSETNSQMS) shows a compositional bias: low complexity. The interval 34 to 68 (SVAQSTQSQSETNSQMSDDLPMATQSTTEANAEIP) is disordered. Residues 56-68 (ATQSTTEANAEIP) are compositionally biased toward polar residues. A run of 5 helical transmembrane segments spans residues 340–360 (TVDYGWLWWLAKPLFWLLTLI), 363–383 (FVINWGIAIILIVVCVKAIFF), 433–453 (LGGCLPILVQMPVFLSLYWVL), 464–484 (FFLWIHDLSVMDPYFILPILM), and 509–529 (IMPVAFSIFFLWFPAGLVLYW).

The protein belongs to the OXA1/ALB3/YidC family. Type 1 subfamily. In terms of assembly, interacts with the Sec translocase complex via SecD. Specifically interacts with transmembrane segments of nascent integral membrane proteins during membrane integration.

It is found in the cell inner membrane. Functionally, required for the insertion and/or proper folding and/or complex formation of integral membrane proteins into the membrane. Involved in integration of membrane proteins that insert both dependently and independently of the Sec translocase complex, as well as at least some lipoproteins. Aids folding of multispanning membrane proteins. The sequence is that of Membrane protein insertase YidC from Marinomonas sp. (strain MWYL1).